Here is a 509-residue protein sequence, read N- to C-terminus: UDP-N-acetylmuramyl-tripeptide synthetase (509 aa).

S30 serves as a coordination point for UDP-N-acetyl-alpha-D-muramoyl-L-alanyl-D-glutamate. G111–T117 provides a ligand contact to ATP. Residues S155 to T156, T182, and R192 each bind UDP-N-acetyl-alpha-D-muramoyl-L-alanyl-D-glutamate. K224 carries the post-translational modification N6-carboxylysine.

This sequence belongs to the MurCDEF family. MurE subfamily. Carboxylation is probably crucial for Mg(2+) binding and, consequently, for the gamma-phosphate positioning of ATP.

The protein resides in the cytoplasm. It participates in cell wall biogenesis; peptidoglycan biosynthesis. In terms of biological role, catalyzes the addition of an amino acid to the nucleotide precursor UDP-N-acetylmuramoyl-L-alanyl-D-glutamate (UMAG) in the biosynthesis of bacterial cell-wall peptidoglycan. The chain is UDP-N-acetylmuramyl-tripeptide synthetase from Roseiflexus sp. (strain RS-1).